A 574-amino-acid chain; its full sequence is Type II methyltransferase M.PaeR7I (574 aa).

This sequence belongs to the N(4)/N(6)-methyltransferase family. In terms of assembly, monomer.

The catalysed reaction is a 2'-deoxyadenosine in DNA + S-adenosyl-L-methionine = an N(6)-methyl-2'-deoxyadenosine in DNA + S-adenosyl-L-homocysteine + H(+). Functionally, a gamma subtype methylase, recognizes the double-stranded sequence 5'-CTCGAG-3', methylates A-5 on both strands, and protects the DNA from cleavage by the PaeR7I endonuclease. In Pseudomonas aeruginosa, this protein is Type II methyltransferase M.PaeR7I (paeR7IM).